The following is a 536-amino-acid chain: Putative UDP-glucuronosyltransferase ugt-47 (536 aa).

Positions Met1–Ala21 are cleaved as a signal peptide. 2 N-linked (GlcNAc...) asparagine glycosylation sites follow: Asn52 and Asn308. A helical transmembrane segment spans residues Ile497–Phe517.

The protein belongs to the UDP-glycosyltransferase family.

The protein localises to the membrane. The enzyme catalyses glucuronate acceptor + UDP-alpha-D-glucuronate = acceptor beta-D-glucuronoside + UDP + H(+). This is Putative UDP-glucuronosyltransferase ugt-47 (ugt-47) from Caenorhabditis elegans.